Here is a 47-residue protein sequence, read N- to C-terminus: PhoP/PhoQ regulator MgrB (47 aa).

Residues 6–26 (WVVLGIVVVVCLLLWAQVFNI) form a helical membrane-spanning segment.

It belongs to the MgrB family. May form homooligomers. Probably interacts with the periplasmic domain of PhoQ.

Its subcellular location is the cell inner membrane. PhoP-regulated transcription is redox-sensitive, being activated when the periplasm becomes more reducing. MgrB acts between DsbA/DsbB and PhoP/PhoQ in this pathway. Represses PhoP/PhoQ signaling, possibly by binding to the periplasmic domain of PhoQ, altering its activity and that of downstream effector PhoP. The sequence is that of PhoP/PhoQ regulator MgrB from Salmonella gallinarum (strain 287/91 / NCTC 13346).